Here is a 356-residue protein sequence, read N- to C-terminus: Glutamine synthetase cytosolic isozyme 1-4 (356 aa).

An N-acetylserine modification is found at serine 2. Phosphoserine occurs at positions 2 and 48. Residues 19-99 form the GS beta-grasp domain; it reads IIAEYIWIGG…VMCDAYTPAG (81 aa). Residues 37 to 66 form a disordered region; that stretch reads ARTLPGPVTDPSQLPKWNYDGSSTGQAPGD. A GS catalytic domain is found at 106–356; the sequence is KRHAAAKIFE…IAESTILWKP (251 aa).

Belongs to the glutamine synthetase family. As to quaternary structure, homooctamer. Interacts with GRF3. In terms of tissue distribution, expressed in the pericycle in the region of lateral root emergence.

It localises to the cytoplasm. It catalyses the reaction L-glutamate + NH4(+) + ATP = L-glutamine + ADP + phosphate + H(+). Its function is as follows. High-affinity glutamine synthetase. May contribute to the homeostatic control of glutamine synthesis in roots. The chain is Glutamine synthetase cytosolic isozyme 1-4 from Arabidopsis thaliana (Mouse-ear cress).